The chain runs to 149 residues: Nucleoside diphosphate kinase (149 aa).

Residues K9, F57, R85, T91, R102, and N112 each coordinate ATP. The active-site Pros-phosphohistidine intermediate is H115.

Belongs to the NDK family. Requires Mg(2+) as cofactor.

It is found in the cytoplasm. It catalyses the reaction a 2'-deoxyribonucleoside 5'-diphosphate + ATP = a 2'-deoxyribonucleoside 5'-triphosphate + ADP. The enzyme catalyses a ribonucleoside 5'-diphosphate + ATP = a ribonucleoside 5'-triphosphate + ADP. Its function is as follows. Major role in the synthesis of nucleoside triphosphates other than ATP. The ATP gamma phosphate is transferred to the NDP beta phosphate via a ping-pong mechanism, using a phosphorylated active-site intermediate. This Methanococcoides burtonii (strain DSM 6242 / NBRC 107633 / OCM 468 / ACE-M) protein is Nucleoside diphosphate kinase.